The sequence spans 206 residues: Protein PH0010 (206 aa).

The AMMECR1 domain occupies 8–202 (EWGEFLVRLA…EEYPRGPIKR (195 aa)).

The chain is Protein PH0010 from Pyrococcus horikoshii (strain ATCC 700860 / DSM 12428 / JCM 9974 / NBRC 100139 / OT-3).